A 248-amino-acid chain; its full sequence is Aspartate/glutamate leucyltransferase (248 aa).

This sequence belongs to the R-transferase family. Bpt subfamily.

The protein localises to the cytoplasm. The enzyme catalyses N-terminal L-glutamyl-[protein] + L-leucyl-tRNA(Leu) = N-terminal L-leucyl-L-glutamyl-[protein] + tRNA(Leu) + H(+). It catalyses the reaction N-terminal L-aspartyl-[protein] + L-leucyl-tRNA(Leu) = N-terminal L-leucyl-L-aspartyl-[protein] + tRNA(Leu) + H(+). In terms of biological role, functions in the N-end rule pathway of protein degradation where it conjugates Leu from its aminoacyl-tRNA to the N-termini of proteins containing an N-terminal aspartate or glutamate. This is Aspartate/glutamate leucyltransferase from Methylobacterium sp. (strain 4-46).